The primary structure comprises 83 residues: Short neurotoxin C (83 aa).

The first 21 residues, 1–21 (MKTLLLTLVVVTMVCLDLAYT), serve as a signal peptide directing secretion. 4 disulfide bridges follow: C24-C45, C38-C62, C64-C75, and C76-C81.

This sequence belongs to the three-finger toxin family. Short-chain subfamily. Type I alpha-neurotoxin sub-subfamily. As to expression, expressed by the venom gland.

It is found in the secreted. In terms of biological role, binds to muscle nicotinic acetylcholine receptor (nAChR) and inhibit acetylcholine from binding to the receptor, thereby impairing neuromuscular transmission. This is Short neurotoxin C from Laticauda colubrina (Yellow-lipped sea krait).